The primary structure comprises 446 residues: Cytochrome P450 monooxygenase ATR14 (446 aa).

The tract at residues Asn403–Lys446 is disordered. Positions Asp408 to Asp430 are enriched in basic and acidic residues. Cys442 is a binding site for heme.

Belongs to the cytochrome P450 family. It depends on heme as a cofactor.

It participates in mycotoxin biosynthesis. In terms of biological role, cytochrome P450 monooxygenase; part of the core atranone cluster (CAC) which products are predicted to catalyze most or all steps of mycotoxin atranone synthesis, starting from geranylgeranyl pyrophosphate (GGPP). The initial cyclization of GGPP to dolabellane is probably performed by the terpene cyclase ATR13. The Baeyer-Villiger oxidation near the end of the atranone synthesis, which converts atranones D and E to atranones F and G is predicted to be catalyzed by the monooxygenase ATR8. Of the CAC's other predicted gene products, the reducing PKS ATR6 might synthesize a polyketide chain. This polyketide is probably transferred onto the atranone backbone by the polyketide transferase ATR5. Other predicted CAC products include 4 oxygenases (ATR2, ATR3, ATR4, and ATR14), 3 short-chain reductases (ATR7, ATR9, and ATR10), and a methyltransferase (ATR12). These may all be involved in the various steps of atranone biosynthesis, although their specific roles must await experimental determination. This is Cytochrome P450 monooxygenase ATR14 from Stachybotrys chlorohalonatus (strain IBT 40285).